A 299-amino-acid chain; its full sequence is Zinc finger protein-like 1 homolog (299 aa).

Residues 1–43 form a B box-type; degenerate zinc finger; the sequence is MGLCKCPKRLVTNQFCFEHRVNVCEHCMVQSHPKCIVQSYLQW. An RING-type; atypical zinc finger spans residues 53–101; that stretch reads CTLCGTTLEQGDCVRLVCYHVFHWDCLNARQAALPANTAPRGHQCPACS. The tract at residues 200–231 is disordered; that stretch reads AGDYASSRRPLLPRQSPIGGTDRDDNKYQRRT. Residue Ser-215 is modified to Phosphoserine. Residues 256-276 form a helical membrane-spanning segment; that stretch reads WFLVTAGILAFVLFVYLMAWL.

The protein belongs to the ZFPL1 family.

The protein localises to the membrane. In Drosophila melanogaster (Fruit fly), this protein is Zinc finger protein-like 1 homolog.